Here is a 177-residue protein sequence, read N- to C-terminus: O-acetyl-ADP-ribose deacetylase (177 aa).

The 175-residue stretch at 1 to 175 (MKTRIHVVQG…LYERLLTQQG (175 aa)) folds into the Macro domain. Substrate is bound by residues 11 to 12 (DI), N25, 33 to 35 (GVD), and 122 to 126 (STGVY). Residue D35 is the Proton acceptor of the active site.

This sequence belongs to the MacroD-type family. YmdB subfamily. As to quaternary structure, homodimer. Interacts with RNase III.

The catalysed reaction is 3''-O-acetyl-ADP-D-ribose + H2O = ADP-D-ribose + acetate + H(+). The enzyme catalyses 2''-O-acetyl-ADP-D-ribose + H2O = ADP-D-ribose + acetate + H(+). In terms of biological role, deacetylates O-acetyl-ADP ribose to yield ADP-ribose and free acetate. Down-regulates ribonuclease 3 (RNase III) activity. Acts by interacting directly with the region of the ribonuclease that is required for dimerization/activation. The polypeptide is O-acetyl-ADP-ribose deacetylase (Shigella flexneri serotype 5b (strain 8401)).